Reading from the N-terminus, the 518-residue chain is Glycerophosphoinositol transporter 1 (518 aa).

Over 1–44 (MEDKDITSVNEKEVNENTNPRIIKYDAERRATRTETSKKDKWKN) the chain is Cytoplasmic. The chain crosses the membrane as a helical span at residues 45–65 (IVTIIASGFALISDGYVNGSM). Residues 66–91 (SMLNKVFVMEYGKKNYSSKVSTRVSN) lie on the Extracellular side of the membrane. Asparagine 80 carries an N-linked (GlcNAc...) asparagine glycan. The helical transmembrane segment at 92-112 (AALVGIIFGQFFMGIAADYYS) threads the bilayer. Topologically, residues 113-114 (RK) are cytoplasmic. Residues 115-136 (SCILVATAILVIGSALCAASHG) traverse the membrane as a helical segment. At 137–138 (TT) the chain is on the extracellular side. Residues 139–159 (VPGMFWMLTVMRGLVGIGVGA) traverse the membrane as a helical segment. Topologically, residues 160–184 (EYPTSTLSANESANEYTTTKRGGIL) are cytoplasmic. Residues 185–205 (VMVTNLPLAFGGPFATIIFLI) form a helical membrane-spanning segment. The Extracellular segment spans residues 206–216 (VYKICSGTKHL). Residues 217-237 (EAIWRTVFAIGCFWPLSVFYF) form a helical membrane-spanning segment. The Cytoplasmic segment spans residues 238 to 268 (RWKTATTEVYEKGRIKRNIPYFLALKFYWKR). A helical membrane pass occupies residues 269–289 (LLGTCGTWFMYDFVTFPNGIF). At 290 to 306 (SSTIISSVIKDQNDLVK) the chain is on the extracellular side. Residues 307–327 (VAEWNLLLGVLAVLGVPIGAY) traverse the membrane as a helical segment. At 328–335 (LSDRIGRK) the chain is on the cytoplasmic side. A helical transmembrane segment spans residues 336–356 (YTLMFGFSGYIIFGLIIGCAY). Residues 357–360 (DQLK) lie on the Extracellular side of the membrane. The helical transmembrane segment at 361 to 381 (KITPLFIIFYAFMNMLGNAGP) threads the bilayer. Over 382 to 399 (GDMLGVISSEASATAVRG) the chain is Cytoplasmic. A helical transmembrane segment spans residues 400–420 (VFYGLSAVTGKIGSVVGVECF). The Extracellular portion of the chain corresponds to 421 to 430 (QPIRDNLGAR). Residues 431–451 (WTFIIAAICGLIGIIITYFFV) traverse the membrane as a helical segment. Residues 452 to 518 (PHSLESDLMK…IISVRQVDQS (67 aa)) are Cytoplasmic-facing.

This sequence belongs to the major facilitator superfamily. Sugar transporter (TC 2.A.1.1) family.

It localises to the cell membrane. The enzyme catalyses sn-glycerol 3-phosphocholine(out) = sn-glycerol 3-phosphocholine(in). The catalysed reaction is sn-glycero-3-phospho-1D-myo-inositol(out) = sn-glycero-3-phospho-1D-myo-inositol(in). Functionally, glycerophosphodiester transporter that mediates uptake of both glycerophosphoinositol (GroPIns) and glycerophosphocholine (GroPCho) as sources of the nutrients inositol and phosphate. The sequence is that of Glycerophosphoinositol transporter 1 from Saccharomyces cerevisiae (strain ATCC 204508 / S288c) (Baker's yeast).